Here is a 410-residue protein sequence, read N- to C-terminus: Peptidase T (410 aa).

His-78 contributes to the Zn(2+) binding site. Asp-80 is an active-site residue. Asp-140 contacts Zn(2+). Glu-174 acts as the Proton acceptor in catalysis. Zn(2+)-binding residues include Glu-175, Asp-197, and His-379.

This sequence belongs to the peptidase M20B family. It depends on Zn(2+) as a cofactor.

It localises to the cytoplasm. The enzyme catalyses Release of the N-terminal residue from a tripeptide.. Cleaves the N-terminal amino acid of tripeptides. The protein is Peptidase T of Vibrio atlanticus (strain LGP32) (Vibrio splendidus (strain Mel32)).